Consider the following 152-residue polypeptide: Large ribosomal subunit protein bL9 (152 aa).

The protein belongs to the bacterial ribosomal protein bL9 family.

Binds to the 23S rRNA. This chain is Large ribosomal subunit protein bL9, found in Synechocystis sp. (strain ATCC 27184 / PCC 6803 / Kazusa).